Reading from the N-terminus, the 411-residue chain is Nuclear receptor subfamily 2 group F member 1-A (411 aa).

The interval 1–68 is disordered; sequence MAMVVSVWRD…AGDKGSQNSG (68 aa). A compositionally biased stretch (low complexity) spans 24–46; it reads NPAAQPAREQQQAASAAPHTPQT. Residues 73-148 constitute a DNA-binding region (nuclear receptor); it reads HIECVVCGDK…VGMRREAVQR (76 aa). NR C4-type zinc fingers lie at residues 76–96 and 112–136; these read CVVC…CEGC and CRAN…LKKC. In terms of domain architecture, NR LBD spans 174 to 400; it reads YLSGYISLLL…TLIRDMLLSG (227 aa).

The protein belongs to the nuclear hormone receptor family. NR2 subfamily. In terms of tissue distribution, first expressed in 11-12 hour embryos. In the rostral brain of 13 hour embryos, expressed within the anterior half of the midbrain and the posterior part of the diencephalon. In the presumptive hindbrain, expressed in a segment-like stripe in the anterior region, resembling the presumptive rhombomere units of the hindbrain. Also detected in the intermediate mesoderm, posterior to the first somite. As somitogenesis proceeds, expression extends posteriorly and flanks the 10 most anterior somites. Expression changes extensively both in level and expansion of domains between 13 and 20 hours. In the rostral brain, expression extends to include a major part of the diencephalon and a caudal portion of the telencephalon. Within the hindbrain, strongly expressed in the two most anterior rhombomeres, and a lower but uniform expression is seen to extend throughout rhombomere 7. In 28 hour embryos, higher and more uniform expression is seen in both rostral and hindbrain areas. Also expressed in the retina of the eye.

It localises to the nucleus. Its function is as follows. Putative transcription factor that is required in photoreceptor cells precursors during eye development. This Danio rerio (Zebrafish) protein is Nuclear receptor subfamily 2 group F member 1-A (nr2f1a).